The sequence spans 347 residues: NADH-ubiquinone oxidoreductase chain 2 (347 aa).

11 consecutive transmembrane segments (helical) span residues 2–22 (LSPLIQSTLLMTLGLGTLVTF), 26–46 (SWILAWIGLEINTIAIIPLMA), 60–80 (YFIAQSAGSATLLVTACLAAW), 94–114 (IILNAMTLALMFKLGMAPMHF), 127–147 (TGMILATWQKLAPITLLIQIA), 151–171 (NNAFILGPALLSVFVGGWGGL), 179–197 (IIAYSSIAHMGWIASMAPF), 201–223 (ITWVTTLIYCLLTSTTFINLNTL), 242–262 (MLLLLLLLSLGGLPPLTGFTN), 274–294 (NLVIYLFMMMMGSLLSLFFYT), and 325–345 (LMTMLSINLFILTPQLMAIFI).

This sequence belongs to the complex I subunit 2 family.

The protein localises to the mitochondrion inner membrane. It carries out the reaction a ubiquinone + NADH + 5 H(+)(in) = a ubiquinol + NAD(+) + 4 H(+)(out). In terms of biological role, core subunit of the mitochondrial membrane respiratory chain NADH dehydrogenase (Complex I) that is believed to belong to the minimal assembly required for catalysis. Complex I functions in the transfer of electrons from NADH to the respiratory chain. The immediate electron acceptor for the enzyme is believed to be ubiquinone. The sequence is that of NADH-ubiquinone oxidoreductase chain 2 (MT-ND2) from Lampetra fluviatilis (European river lamprey).